The chain runs to 358 residues: UDP-N-acetylglucosamine--N-acetylmuramyl-(pentapeptide) pyrophosphoryl-undecaprenol N-acetylglucosamine transferase (358 aa).

UDP-N-acetyl-alpha-D-glucosamine is bound by residues 13 to 15 (TGG), Asn125, Arg162, Ser190, Ile244, 263 to 268 (ALTVAE), and Gln289.

The protein belongs to the glycosyltransferase 28 family. MurG subfamily.

The protein resides in the cell inner membrane. The enzyme catalyses di-trans,octa-cis-undecaprenyl diphospho-N-acetyl-alpha-D-muramoyl-L-alanyl-D-glutamyl-meso-2,6-diaminopimeloyl-D-alanyl-D-alanine + UDP-N-acetyl-alpha-D-glucosamine = di-trans,octa-cis-undecaprenyl diphospho-[N-acetyl-alpha-D-glucosaminyl-(1-&gt;4)]-N-acetyl-alpha-D-muramoyl-L-alanyl-D-glutamyl-meso-2,6-diaminopimeloyl-D-alanyl-D-alanine + UDP + H(+). It functions in the pathway cell wall biogenesis; peptidoglycan biosynthesis. Functionally, cell wall formation. Catalyzes the transfer of a GlcNAc subunit on undecaprenyl-pyrophosphoryl-MurNAc-pentapeptide (lipid intermediate I) to form undecaprenyl-pyrophosphoryl-MurNAc-(pentapeptide)GlcNAc (lipid intermediate II). This Halorhodospira halophila (strain DSM 244 / SL1) (Ectothiorhodospira halophila (strain DSM 244 / SL1)) protein is UDP-N-acetylglucosamine--N-acetylmuramyl-(pentapeptide) pyrophosphoryl-undecaprenol N-acetylglucosamine transferase.